We begin with the raw amino-acid sequence, 153 residues long: Superoxide dismutase [Cu-Zn] (153 aa).

Cu cation contacts are provided by His45, His47, and His62. A disulfide bond links Cys56 and Cys145. Residues His62, His70, His79, and Asp82 each coordinate Zn(2+). Residue His119 coordinates Cu cation.

This sequence belongs to the Cu-Zn superoxide dismutase family. In terms of assembly, homodimer. Requires Cu cation as cofactor. Zn(2+) serves as cofactor.

The protein localises to the cytoplasm. It catalyses the reaction 2 superoxide + 2 H(+) = H2O2 + O2. Functionally, destroys radicals which are normally produced within the cells and which are toxic to biological systems. This chain is Superoxide dismutase [Cu-Zn], found in Drosophila yakuba (Fruit fly).